The sequence spans 239 residues: Ribonuclease PH (239 aa).

Residues arginine 86 and 124–126 contribute to the phosphate site; that span reads GTR.

Belongs to the RNase PH family. Homohexameric ring arranged as a trimer of dimers.

It catalyses the reaction tRNA(n+1) + phosphate = tRNA(n) + a ribonucleoside 5'-diphosphate. Its function is as follows. Phosphorolytic 3'-5' exoribonuclease that plays an important role in tRNA 3'-end maturation. Removes nucleotide residues following the 3'-CCA terminus of tRNAs; can also add nucleotides to the ends of RNA molecules by using nucleoside diphosphates as substrates, but this may not be physiologically important. Probably plays a role in initiation of 16S rRNA degradation (leading to ribosome degradation) during starvation. This Sodalis glossinidius (strain morsitans) protein is Ribonuclease PH.